Reading from the N-terminus, the 318-residue chain is 2-methyl-6-phytyl-1,4-hydroquinone methyltransferase (318 aa).

The first 39 residues, 1–39 (MPEYLLLPAGLISLSLAIAAGLYLLTARGYQSSDSVANA), serve as a signal peptide directing secretion. Residues 97–106 (VLDVGCGIGG) are SAM motif I. The tract at residues 157–165 (GSFDVVWSV) is SAM motif II. Residues 184–193 (VVKPGGILVV) form an SAM motif III region.

It belongs to the class I-like SAM-binding methyltransferase superfamily. gTMT family.

It catalyses the reaction 2-methyl-6-phytyl-1,4-benzene-1,4-diol + S-adenosyl-L-methionine = 2,3-dimethyl-6-phytylbenzene-1,4-diol + S-adenosyl-L-homocysteine + H(+). The catalysed reaction is 2-methyl-6-(all-trans-nonaprenyl)benzene-1,4-diol + S-adenosyl-L-methionine = plastoquinol-9 + S-adenosyl-L-homocysteine + H(+). It carries out the reaction 6-geranylgeranyl-2-methylbenzene-1,4-diol + S-adenosyl-L-methionine = 6-geranylgeranyl-2,3-dimethylbenzene-1,4-diol + S-adenosyl-L-homocysteine + H(+). It participates in cofactor biosynthesis; tocopherol biosynthesis. Its function is as follows. Involved in a key methylation step in both tocopherol (vitamin E) and plastoquinone synthesis. Catalyzes the conversion of 2-methyl-6-phytyl-1,4-hydroquinol (MPBQ) to 2,3-dimethyl-6-phytyl-1,4-hydroquinol (DMPQ, a substrate for tocopherol cyclase), and 2-methyl-6-solanyl-1,4-benzoquinol (MSBQ) to plastoquinol. In Synechocystis sp. (strain ATCC 27184 / PCC 6803 / Kazusa), this protein is 2-methyl-6-phytyl-1,4-hydroquinone methyltransferase.